A 223-amino-acid chain; its full sequence is Ribonuclease 3 (223 aa).

An RNase III domain is found at Leu-3–Gly-125. Glu-38 serves as a coordination point for Mg(2+). The active site involves Asp-42. Mg(2+) contacts are provided by Asp-111 and Glu-114. The active site involves Glu-114. One can recognise a DRBM domain in the interval Asp-152–Ile-222.

Belongs to the ribonuclease III family. Homodimer. Mg(2+) is required as a cofactor.

It localises to the cytoplasm. The catalysed reaction is Endonucleolytic cleavage to 5'-phosphomonoester.. Functionally, digests double-stranded RNA. Involved in the processing of primary rRNA transcript to yield the immediate precursors to the large and small rRNAs (23S and 16S). Processes some mRNAs, and tRNAs when they are encoded in the rRNA operon. Processes pre-crRNA and tracrRNA of type II CRISPR loci if present in the organism. The protein is Ribonuclease 3 of Histophilus somni (strain 2336) (Haemophilus somnus).